The following is a 370-amino-acid chain: Histidinol-phosphate aminotransferase (370 aa).

Lys-220 is subject to N6-(pyridoxal phosphate)lysine.

It belongs to the class-II pyridoxal-phosphate-dependent aminotransferase family. Histidinol-phosphate aminotransferase subfamily. As to quaternary structure, homodimer. Requires pyridoxal 5'-phosphate as cofactor.

The enzyme catalyses L-histidinol phosphate + 2-oxoglutarate = 3-(imidazol-4-yl)-2-oxopropyl phosphate + L-glutamate. The protein operates within amino-acid biosynthesis; L-histidine biosynthesis; L-histidine from 5-phospho-alpha-D-ribose 1-diphosphate: step 7/9. This chain is Histidinol-phosphate aminotransferase, found in Granulibacter bethesdensis (strain ATCC BAA-1260 / CGDNIH1).